Reading from the N-terminus, the 82-residue chain is Small ribosomal subunit protein uS17 (82 aa).

The protein belongs to the universal ribosomal protein uS17 family. As to quaternary structure, part of the 30S ribosomal subunit.

Functionally, one of the primary rRNA binding proteins, it binds specifically to the 5'-end of 16S ribosomal RNA. The sequence is that of Small ribosomal subunit protein uS17 from Thermosynechococcus vestitus (strain NIES-2133 / IAM M-273 / BP-1).